The chain runs to 117 residues: MAGLVKLSCLVLACMIVAGPIATNAALSCGTVSGNLAACIGYLTQNGPLPRGCCTGVTNLNNMARTTPDRQQACRCLVGAANAFPTLNAARAAGLPKACGVNIPYKISKSTNCNSVR.

The signal sequence occupies residues 1-25 (MAGLVKLSCLVLACMIVAGPIATNA). 4 disulfide bridges follow: Cys-29–Cys-76, Cys-39–Cys-53, Cys-54–Cys-99, and Cys-74–Cys-113.

It belongs to the plant LTP family.

Its function is as follows. Plant non-specific lipid-transfer proteins transfer phospholipids as well as galactolipids across membranes. May play a role in wax or cutin deposition in the cell walls of expanding epidermal cells and certain secretory tissues. The protein is Non-specific lipid-transfer protein 1 (LTP1) of Brassica napus (Rape).